The sequence spans 513 residues: MQLNSTEISDLIKQRIEQFEVVSESRNEGTIVAVSDGIIRIHGLADVMQGEMIELPGSRFAIALNLERDSVGAVVMGPYADLAEGVKVKTTGRILEVPVGRGLLGRVVNTLGEPIDGKGAIDNDGFSPVEVIAPGVIERKSVDQPVQTGYKAVDAMIPIGRGQRELIIGDRQTGKTAMAIDAIINQRDSGIKCVYVAVGQKASTIANVVRKLEEHGALANTIVVVATASEAAALQYLAPYSGCAMGEYFRDRGEDALIVYDDLSKQAVAYRQISLLLKRPPGREAYPGDVFYLHSRLLERASRVNEEYVEKFTKGAVTGQTGSLTALPIIETQAGDVSAFVPTNVISITDGQIFLETDLFNSGLRPAVNPGISVSRVGGAAQTKIIKKLSGGIRTALAQYRELAAFSQFASDLDDATRAQLEHGVRVTELMKQKQYAPMSVAAQAVSIFAAEKGYLKGVELNKVGDFEAALLSYMNSEHAALIKLINETGDYNADIEAELKAGLDKFVATQTW.

Residue 169 to 176 (GDRQTGKT) participates in ATP binding.

Belongs to the ATPase alpha/beta chains family. In terms of assembly, F-type ATPases have 2 components, CF(1) - the catalytic core - and CF(0) - the membrane proton channel. CF(1) has five subunits: alpha(3), beta(3), gamma(1), delta(1), epsilon(1). CF(0) has three main subunits: a(1), b(2) and c(9-12). The alpha and beta chains form an alternating ring which encloses part of the gamma chain. CF(1) is attached to CF(0) by a central stalk formed by the gamma and epsilon chains, while a peripheral stalk is formed by the delta and b chains.

It localises to the cell inner membrane. The enzyme catalyses ATP + H2O + 4 H(+)(in) = ADP + phosphate + 5 H(+)(out). Produces ATP from ADP in the presence of a proton gradient across the membrane. The alpha chain is a regulatory subunit. The polypeptide is ATP synthase subunit alpha (Shewanella sp. (strain MR-4)).